An 86-amino-acid polypeptide reads, in one-letter code: Putative defensin-like protein 9 (86 aa).

An N-terminal signal peptide occupies residues 1-29 (MKSSMQLISTLFFLVILVVAPGMKMVVEG). Q30 carries the pyrrolidone carboxylic acid modification. 4 disulfide bridges follow: C34/C79, C45/C65, C51/C73, and C55/C75.

Belongs to the DEFL family.

It is found in the secreted. This Arabidopsis thaliana (Mouse-ear cress) protein is Putative defensin-like protein 9 (LCR76).